The following is a 524-amino-acid chain: 3-epi-6-deoxocathasterone 23-monooxygenase CYP90C1 (524 aa).

The chain crosses the membrane as a helical span at residues 25–45; sequence YLVAGFLVLTAGILLRPWLWL. Position 463 (Cys463) interacts with heme.

This sequence belongs to the cytochrome P450 family. Heme serves as cofactor. In terms of tissue distribution, widely expressed.

The protein localises to the endoplasmic reticulum membrane. It catalyses the reaction 3-epi-6-deoxocathasterone + reduced [NADPH--hemoprotein reductase] + O2 = 6-deoxotyphasterol + oxidized [NADPH--hemoprotein reductase] + H2O + H(+). The enzyme catalyses (22S,24R)-22-hydroxy-5alpha-ergostan-3-one + reduced [NADPH--hemoprotein reductase] + O2 = 3-dehydro-6-deoxoteasterone + oxidized [NADPH--hemoprotein reductase] + H2O + H(+). It functions in the pathway plant hormone biosynthesis; brassinosteroid biosynthesis. In terms of biological role, involved in brassinosteroid (BR) biosynthesis. Converts typhasterol (TY) to cathasterone (CS) and 6-deoxotyphasterol (6-deoxoTY) to 6-deoxocathasterone (6-deoxoCT). C-23 hydroxylase that converts directly (22S,24R)-22-hydroxy-5-alpha-ergostan-3-one and 3-epi-6-deoxocathasterone to 3-dehydro-6-deoxoteasterone (6-deoxo3DT, 6-deoxo3DHT) and 6-deoxotyphasterol (6-deoxoTY), respectively. These C-23 hydroxylation shortcuts bypass campestanol, 6-deoxocathasterone, and 6-deoxoteasterone (6-deoxoTE). Also catalyzes the conversion of cathasterone to teasterone (TE), (22S,24R)-22-hydroxyergost-4-en-3-one (22-OH-4-en-3-one) to (22R,23R)-22,23-dihydroxy-campest-4-en-3-one (22,23-diOH-4-en-3-one) and (22S)-22-hydroxycampesterol (22-OHCR) to (22R,23R)-22,23-dihydroxycampesterol (22,23-diOHCR). Required for the regulation of polar elongation of leaf cells. Required for the longitudinal elongation of floral organs. The protein is 3-epi-6-deoxocathasterone 23-monooxygenase CYP90C1 of Arabidopsis thaliana (Mouse-ear cress).